Reading from the N-terminus, the 257-residue chain is GTP cyclohydrolase FolE2 (257 aa).

Belongs to the GTP cyclohydrolase IV family.

The catalysed reaction is GTP + H2O = 7,8-dihydroneopterin 3'-triphosphate + formate + H(+). The protein operates within cofactor biosynthesis; 7,8-dihydroneopterin triphosphate biosynthesis; 7,8-dihydroneopterin triphosphate from GTP: step 1/1. In terms of biological role, converts GTP to 7,8-dihydroneopterin triphosphate. The sequence is that of GTP cyclohydrolase FolE2 from Kosmotoga olearia (strain ATCC BAA-1733 / DSM 21960 / TBF 19.5.1).